A 497-amino-acid chain; its full sequence is PHD finger protein 10 (497 aa).

A disordered region spans residues 1–61 (MAAAGPGAAL…SSRSCETSSQ (61 aa)). 3 positions are modified to phosphoserine: S11, S35, and S49. The interval 88-184 (MLQEQVSEYL…HYKEYSQMQQ (97 aa)) is essential to induce neural progenitor proliferation. An SAY region spans residues 88-294 (MLQEQVSEYL…PPLDPELPAL (207 aa)). Residue K240 forms a Glycyl lysine isopeptide (Lys-Gly) (interchain with G-Cter in SUMO2) linkage. S269 bears the Phosphoserine mark. Residues 284 to 295 (EPPLDPELPALD) are compositionally biased toward low complexity. The tract at residues 284–367 (EPPLDPELPA…KRSVLSKSVP (84 aa)) is disordered. Residues 291-333 (LPALDSDGDSDDGEDGGGDEKRKNKGTSDSSSGNVSEGDSPPD) form an essential to induce neural progenitor proliferation region. Residues S296, S300, S326, and S330 each carry the phosphoserine modification. Acidic residues predominate over residues 296 to 307 (SDGDSDDGEDGG). The segment covering 317–327 (TSDSSSGNVSE) has biased composition (polar residues). Basic and acidic residues predominate over residues 344–358 (KSKDKMATPRKDGSK). Residues 378-435 (LCGICLKGKESNKKGKAESLIHCSQCDNSGHPSCLDMTMELVSMIKTYPWQCMECKTC) form a PHD-type 1; degenerate zinc finger. K384 participates in a covalent cross-link: Glycyl lysine isopeptide (Lys-Gly) (interchain with G-Cter in SUMO2). The segment at 437–480 (ICGQPHHEEEMMFCDVCDRGYHTFCVGLGAIPSGRWICDCCQRA) adopts a PHD-type 2; degenerate zinc-finger fold.

It belongs to the SAYP family. As to quaternary structure, component of neural progenitors-specific chromatin remodeling complex (npBAF complex) composed of at least, ARID1A/BAF250A or ARID1B/BAF250B, SMARCD1/BAF60A, SMARCD3/BAF60C, SMARCA2/BRM/BAF190B, SMARCA4/BRG1/BAF190A, SMARCB1/BAF47, SMARCC1/BAF155, SMARCE1/BAF57, SMARCC2/BAF170, PHF10/BAF45A, ACTL6A/BAF53A and actin. Interacts with ACTL6A/BAF53A, SMARCA2/BRM/BAF190B, SMARCA4/BRG1/BAF190A and PBRM1/BAF180.

It is found in the nucleus. Its function is as follows. Involved in transcription activity regulation by chromatin remodeling. Belongs to the neural progenitors-specific chromatin remodeling complex (npBAF complex) and is required for the proliferation of neural progenitors. During neural development a switch from a stem/progenitor to a post-mitotic chromatin remodeling mechanism occurs as neurons exit the cell cycle and become committed to their adult state. The transition from proliferating neural stem/progenitor cells to post-mitotic neurons requires a switch in subunit composition of the npBAF and nBAF complexes. As neural progenitors exit mitosis and differentiate into neurons, npBAF complexes which contain ACTL6A/BAF53A and PHF10/BAF45A, are exchanged for homologous alternative ACTL6B/BAF53B and DPF1/BAF45B or DPF3/BAF45C subunits in neuron-specific complexes (nBAF). The npBAF complex is essential for the self-renewal/proliferative capacity of the multipotent neural stem cells. The nBAF complex along with CREST plays a role regulating the activity of genes essential for dendrite growth. This is PHD finger protein 10 (Phf10) from Rattus norvegicus (Rat).